A 186-amino-acid polypeptide reads, in one-letter code: Peptidyl-tRNA hydrolase (186 aa).

A tRNA-binding site is contributed by Y14. H19 (proton acceptor) is an active-site residue. Y64, N66, and N112 together coordinate tRNA.

The protein belongs to the PTH family. In terms of assembly, monomer.

It is found in the cytoplasm. The catalysed reaction is an N-acyl-L-alpha-aminoacyl-tRNA + H2O = an N-acyl-L-amino acid + a tRNA + H(+). In terms of biological role, hydrolyzes ribosome-free peptidyl-tRNAs (with 1 or more amino acids incorporated), which drop off the ribosome during protein synthesis, or as a result of ribosome stalling. Functionally, catalyzes the release of premature peptidyl moieties from peptidyl-tRNA molecules trapped in stalled 50S ribosomal subunits, and thus maintains levels of free tRNAs and 50S ribosomes. The sequence is that of Peptidyl-tRNA hydrolase from Lachnospira eligens (strain ATCC 27750 / DSM 3376 / VPI C15-48 / C15-B4) (Eubacterium eligens).